Reading from the N-terminus, the 244-residue chain is Protein IN2-1 homolog B (244 aa).

The disordered stretch occupies residues 1–27; sequence MAAAAAAPASSEKEVLPPSLTSSSEPP. The GST N-terminal domain occupies 32–113; it reads GTTRLYVAYH…YIDTNFEGPA (82 aa). Glutathione-binding positions include Val85 and 97-98; that span reads ES. One can recognise a GST C-terminal domain in the interval 118-241; that stretch reads DSEKQQFAEE…FLLEHTKKRL (124 aa).

This Oryza sativa subsp. indica (Rice) protein is Protein IN2-1 homolog B (GSTZ5).